The primary structure comprises 467 residues: Ethanolamine-phosphate phospho-lyase homolog 1 (467 aa).

Position 307 is an N6-(pyridoxal phosphate)lysine (Lys-307).

The protein belongs to the class-III pyridoxal-phosphate-dependent aminotransferase family. Pyridoxal 5'-phosphate is required as a cofactor.

This chain is Ethanolamine-phosphate phospho-lyase homolog 1, found in Caenorhabditis elegans.